We begin with the raw amino-acid sequence, 476 residues long: Bifunctional protein HldE (476 aa).

The tract at residues 1-319 (MKVSLPAFEK…EALALHHGES (319 aa)) is ribokinase. 195–198 (NMSE) lines the ATP pocket. Residue Asp-264 is part of the active site. Positions 345-476 (MTNGCFDILH…AIIQNIMANQ (132 aa)) are cytidylyltransferase.

This sequence in the N-terminal section; belongs to the carbohydrate kinase PfkB family. In the C-terminal section; belongs to the cytidylyltransferase family. In terms of assembly, homodimer.

The enzyme catalyses D-glycero-beta-D-manno-heptose 7-phosphate + ATP = D-glycero-beta-D-manno-heptose 1,7-bisphosphate + ADP + H(+). The catalysed reaction is D-glycero-beta-D-manno-heptose 1-phosphate + ATP + H(+) = ADP-D-glycero-beta-D-manno-heptose + diphosphate. Its pathway is nucleotide-sugar biosynthesis; ADP-L-glycero-beta-D-manno-heptose biosynthesis; ADP-L-glycero-beta-D-manno-heptose from D-glycero-beta-D-manno-heptose 7-phosphate: step 1/4. The protein operates within nucleotide-sugar biosynthesis; ADP-L-glycero-beta-D-manno-heptose biosynthesis; ADP-L-glycero-beta-D-manno-heptose from D-glycero-beta-D-manno-heptose 7-phosphate: step 3/4. Functionally, catalyzes the phosphorylation of D-glycero-D-manno-heptose 7-phosphate at the C-1 position to selectively form D-glycero-beta-D-manno-heptose-1,7-bisphosphate. Its function is as follows. Catalyzes the ADP transfer from ATP to D-glycero-beta-D-manno-heptose 1-phosphate, yielding ADP-D-glycero-beta-D-manno-heptose. The chain is Bifunctional protein HldE from Shewanella putrefaciens (strain CN-32 / ATCC BAA-453).